A 191-amino-acid chain; its full sequence is Molybdenum cofactor guanylyltransferase (191 aa).

GTP contacts are provided by residues 13–15 (LAG), K26, D72, and D102. D102 is a Mg(2+) binding site.

Belongs to the MobA family. In terms of assembly, monomer. Mg(2+) is required as a cofactor.

It localises to the cytoplasm. The enzyme catalyses Mo-molybdopterin + GTP + H(+) = Mo-molybdopterin guanine dinucleotide + diphosphate. Its function is as follows. Transfers a GMP moiety from GTP to Mo-molybdopterin (Mo-MPT) cofactor (Moco or molybdenum cofactor) to form Mo-molybdopterin guanine dinucleotide (Mo-MGD) cofactor. This is Molybdenum cofactor guanylyltransferase from Pseudomonas putida (Arthrobacter siderocapsulatus).